A 476-amino-acid chain; its full sequence is Glycogen synthase (476 aa).

Residue K15 participates in ADP-alpha-D-glucose binding.

The protein belongs to the glycosyltransferase 1 family. Bacterial/plant glycogen synthase subfamily.

It catalyses the reaction [(1-&gt;4)-alpha-D-glucosyl](n) + ADP-alpha-D-glucose = [(1-&gt;4)-alpha-D-glucosyl](n+1) + ADP + H(+). It functions in the pathway glycan biosynthesis; glycogen biosynthesis. In terms of biological role, synthesizes alpha-1,4-glucan chains using ADP-glucose. This Bacillus cereus (strain ZK / E33L) protein is Glycogen synthase.